We begin with the raw amino-acid sequence, 244 residues long: Small ribosomal subunit protein uS2 (244 aa).

It belongs to the universal ribosomal protein uS2 family.

The chain is Small ribosomal subunit protein uS2 from Hydrogenovibrio crunogenus (strain DSM 25203 / XCL-2) (Thiomicrospira crunogena).